The following is a 503-amino-acid chain: Beta-amylase Tri a 17 (503 aa).

Residues Asp51, His91, and Asp99 each contribute to the substrate site. Residue Glu184 is the Proton donor of the active site. The substrate site is built by Lys293, His298, and Thr340. Residue Glu378 is the Proton acceptor of the active site. Residues 379 to 380 (NA) and Arg418 contribute to the substrate site.

This sequence belongs to the glycosyl hydrolase 14 family.

The catalysed reaction is Hydrolysis of (1-&gt;4)-alpha-D-glucosidic linkages in polysaccharides so as to remove successive maltose units from the non-reducing ends of the chains.. The sequence is that of Beta-amylase Tri a 17 (BMY1) from Triticum aestivum (Wheat).